The sequence spans 281 residues: Ermin (281 aa).

Composition is skewed to polar residues over residues methionine 1–glutamate 12, asparagine 21–glutamine 31, and alanine 135–threonine 147. Disordered regions lie at residues methionine 1–asparagine 80, arginine 110–threonine 147, and lysine 167–alanine 248. The span at aspartate 169–glutamate 197 shows a compositional bias: acidic residues. Positions valine 198–serine 223 are enriched in basic and acidic residues. A phosphoserine mark is found at serine 211, serine 223, serine 227, and serine 230. Threonine 234 carries the phosphothreonine modification. Residues lysine 262–leucine 281 are binds actin.

In terms of assembly, binds actin. As to expression, brain and spinal cord. Exclusively expressed by the oligodendrocytes. Appears at a late stage during myelination, and in the mature nerves, it is localized to the outer cytoplasmic lip of the myelin sheath and the paranodal loops.

It is found in the cytoplasm. Its subcellular location is the cytoskeleton. Its function is as follows. Plays a role in cytoskeletal rearrangements during the late wrapping and/or compaction phases of myelinogenesis as well as in maintenance and stability of myelin sheath in the adult. May play an important role in late-stage oligodendroglia maturation, myelin/Ranvier node formation during CNS development, and in the maintenance and plasticity of related structures in the mature CNS. This chain is Ermin (Ermn), found in Mus musculus (Mouse).